Here is a 344-residue protein sequence, read N- to C-terminus: tRNA N6-adenosine threonylcarbamoyltransferase (344 aa).

The Fe cation site is built by His111 and His115. Substrate is bound by residues 134–138 (LVSGG), Asp167, Gly180, and Asn277. Asp305 is a Fe cation binding site.

It belongs to the KAE1 / TsaD family. The cofactor is Fe(2+).

The protein localises to the cytoplasm. It catalyses the reaction L-threonylcarbamoyladenylate + adenosine(37) in tRNA = N(6)-L-threonylcarbamoyladenosine(37) in tRNA + AMP + H(+). In terms of biological role, required for the formation of a threonylcarbamoyl group on adenosine at position 37 (t(6)A37) in tRNAs that read codons beginning with adenine. Is involved in the transfer of the threonylcarbamoyl moiety of threonylcarbamoyl-AMP (TC-AMP) to the N6 group of A37, together with TsaE and TsaB. TsaD likely plays a direct catalytic role in this reaction. This is tRNA N6-adenosine threonylcarbamoyltransferase from Glaesserella parasuis serovar 5 (strain SH0165) (Haemophilus parasuis).